Reading from the N-terminus, the 170-residue chain is Peptidyl-prolyl cis-trans isomerase ESS1 (170 aa).

One can recognise a WW domain in the interval 9-43; that stretch reads TGLPTPWTVRYSKSKKREYFFNPETKHSQWEEPEG. Residues 30-53 form a disordered region; it reads NPETKHSQWEEPEGTNKDQLHKHL. A compositionally biased stretch (basic and acidic residues) spans 32–53; sequence ETKHSQWEEPEGTNKDQLHKHL. The region spanning 57–170 is the PpiC domain; sequence PVRVRCLHIL…SGVHVIKRVG (114 aa). Serine 161 bears the Phosphoserine mark.

It belongs to the PpiC/parvulin rotamase family. As to quaternary structure, interacts with the RNA polymerase II largest subunit (RPB1) and with the SIN1-RDP3 HDAC subunit SIN3.

Its subcellular location is the cytoplasm. It is found in the nucleus. The catalysed reaction is [protein]-peptidylproline (omega=180) = [protein]-peptidylproline (omega=0). With respect to regulation, inhibited by 5-hydroxy-1,4-naphthoquinone (juglone), but not by FK506 or cyclosporin A. Its function is as follows. Essential PPIase specific for phosphoserine and phosphothreonine N-terminal to the proline residue. Required for efficient pre-mRNA 3'-end processing and transcription termination, probably by inducing conformational changes by proline-directed isomerization in the C-terminal domain (CTD) of RPB1, thereby altering cofactor binding with the RNA polymerase II transcription complex. Also targets the SIN3-RPD3 histone deacetylase complex (HDAC). This Saccharomyces cerevisiae (strain ATCC 204508 / S288c) (Baker's yeast) protein is Peptidyl-prolyl cis-trans isomerase ESS1 (ESS1).